A 237-amino-acid polypeptide reads, in one-letter code: Protein lin-31 (237 aa).

The fork-head DNA-binding region spans 12 to 103 (QKPPYSYIWL…SGMFENGSCL (92 aa)). Disordered stretches follow at residues 110-141 (RARG…LLPE) and 195-237 (NFES…ILSS). 2 stretches are compositionally biased toward low complexity: residues 206–216 (SEISGSGSSSS) and 227–237 (SSFSIESILSS).

The protein localises to the nucleus. Lin-31 regulates how vulval precursor cells choose their fate. It helps specify three alternative cell fates in vulval development. The polypeptide is Protein lin-31 (lin-31) (Caenorhabditis elegans).